Reading from the N-terminus, the 473-residue chain is ATP synthase subunit beta 2 (473 aa).

158–165 is an ATP binding site; it reads GGAGVGKT.

The protein belongs to the ATPase alpha/beta chains family. In terms of assembly, F-type ATPases have 2 components, CF(1) - the catalytic core - and CF(0) - the membrane proton channel. CF(1) has five subunits: alpha(3), beta(3), gamma(1), delta(1), epsilon(1). CF(0) has three main subunits: a(1), b(2) and c(9-12). The alpha and beta chains form an alternating ring which encloses part of the gamma chain. CF(1) is attached to CF(0) by a central stalk formed by the gamma and epsilon chains, while a peripheral stalk is formed by the delta and b chains.

It is found in the cell membrane. It carries out the reaction ATP + H2O + 4 H(+)(in) = ADP + phosphate + 5 H(+)(out). Its function is as follows. Produces ATP from ADP in the presence of a proton gradient across the membrane. The catalytic sites are hosted primarily by the beta subunits. The sequence is that of ATP synthase subunit beta 2 from Listeria monocytogenes serotype 4b (strain F2365).